A 116-amino-acid polypeptide reads, in one-letter code: Thioredoxin (116 aa).

Residues 2–113 enclose the Thioredoxin domain; it reads TDSEKSATIK…LLRELSDVVP (112 aa). A disulfide bridge connects residues Cys-37 and Cys-40.

The protein belongs to the thioredoxin family.

Functionally, participates in various redox reactions through the reversible oxidation of its active center dithiol to a disulfide and catalyzes dithiol-disulfide exchange reactions. The sequence is that of Thioredoxin (trxA) from Mycobacterium bovis (strain ATCC BAA-935 / AF2122/97).